The following is a 592-amino-acid chain: AT-rich interactive domain-containing protein 5A (592 aa).

The segment at Met-1–Glu-53 is disordered. Residues Met-1 to Ser-299 form an interaction with SOX9 region. Ser-23 is modified (phosphoserine). The span at Gly-28–Glu-49 shows a compositional bias: basic and acidic residues. Residues Gln-52 to Lys-144 form the ARID domain. Residues Lys-82 and Lys-91 each participate in a glycyl lysine isopeptide (Lys-Gly) (interchain with G-Cter in ubiquitin) cross-link. The interval Leu-143–Pro-225 is disordered. Residues Met-162–Asp-186 show a composition bias toward basic and acidic residues. Ser-253 is subject to Phosphoserine. A disordered region spans residues Cys-277–Arg-333. The span at Gln-286–Glu-295 shows a compositional bias: pro residues. A phosphoserine mark is found at Ser-438 and Ser-463.

In terms of assembly, interacts with SOX9. Interacts with ESR1. Interacts with RORC. Post-translationally, phosphorylated by MAPK14 on serine residues involving a TLR4 signaling pathway upon lipopolysaccharide (LPS) stimulation leading to its ubiquitination and proteasomal degradation. In terms of processing, ubiquitinated leading to proteasomal degradation; involving WWP1 linked to MAPK14-mediated phosphorylation upon LPS stimulation.

The protein resides in the nucleus. Functionally, DNA-binding protein that may regulate transcription and act as a repressor by binding to AT-rich stretches in the promoter region of target genes. May act as repressor and down-regulate enhancer-dependent gene expressison. May positively regulate chondrocyte-specific transcription such as of COL2A1 in collaboration with SOX9 and positively regulate histone H3 acetylation at chondrocyte-specific genes. May stimulate early-stage chondrocyte differentiation and inhibit later stage differention. Can repress ESR1-mediated transcriptional activation; proposed to act as corepressor for selective nuclear hormone receptors. As an RNA-binding protein, involved in the regulation of inflammatory response by stabilizing selective inflammation-related mRNAs, such as STAT3 and TBX21. Also stabilizes IL6 mRNA. Binds to stem loop structures located in the 3'UTRs of IL6, STAT3 and TBX21 mRNAs; at least for STAT3 prevents binding of ZC3H12A to the mRNA stem loop structure thus inhibiting its degradation activity. Contributes to elevated IL6 levels possibly implicated in autoimmunity processes. IL6-dependent stabilization of STAT3 mRNA may promote differentiation of naive CD4+ T-cells into T-helper Th17 cells. In CD4+ T-cells may also inhibit RORC-induced Th17 cell differentiation independently of IL6 signaling. Stabilization of TBX21 mRNA contributes to elevated interferon-gamma secretion in Th1 cells possibly implicated in the establishment of septic shock. Stabilizes TNFRSF4/OX40 mRNA by binding to the conserved stem loop structure in its 3'UTR; thereby competing with the mRNA-destabilizing functions of RC3H1 and endoribonuclease ZC3H12A. This chain is AT-rich interactive domain-containing protein 5A (ARID5A), found in Bos taurus (Bovine).